A 287-amino-acid chain; its full sequence is Ret finger protein-like 4A (287 aa).

The RING-type; degenerate zinc-finger motif lies at 11–53 (CYFCFRCLESPVYLNCGYICCLKCLDSLEKSPEGDGVLCPTCS). In terms of domain architecture, B30.2/SPRY spans 78-278 (EPQLNFILTM…LSICPVTNPG (201 aa)).

As to quaternary structure, interacts with PSMB1, UBE2A and CCNB1. Expressed in the ovaries and oocytes (at protein level). Expression restricted to gonads. In testis, present at later stages of spermatogeneis and abundant in elongating spermatids.

It is found in the cytoplasm. Its subcellular location is the nucleus. This Mus musculus (Mouse) protein is Ret finger protein-like 4A (Rfpl4a).